The sequence spans 540 residues: Collagen alpha-1(XXIII) chain (540 aa).

Over residues 1–26 (MGPGERAGGGGDAGKGNAAGGGGGGR) the composition is skewed to gly residues. A disordered region spans residues 1-28 (MGPGERAGGGGDAGKGNAAGGGGGGRSA). At 1–34 (MGPGERAGGGGDAGKGNAAGGGGGGRSATTAGSR) the chain is on the cytoplasmic side. The chain crosses the membrane as a helical; Signal-anchor for type II membrane protein span at residues 35–56 (AVSALCLLLSVGSAAACLLLGV). Residues 57–540 (QAAALQGRVA…GLPVPGCWHK (484 aa)) lie on the Extracellular side of the membrane. Disordered regions lie at residues 109 to 304 (AREA…GEQG) and 316 to 540 (LDAL…CWHK). Collagen-like domains follow at residues 124-243 (GRRG…PGKK), 251-305 (QPGP…EQGD), 321-380 (GPPG…MGLS), 412-460 (GPPG…GPPG), and 463-522 (GLPG…PGLD). 2 stretches are compositionally biased toward low complexity: residues 140–156 (QSGR…DGKP) and 168–183 (PGDF…DGAA). Residues 185–195 (PPGPPGPPGAR) show a composition bias toward pro residues. Residues 322-334 (PPGPQGPPGPPGI) show a composition bias toward pro residues. Positions 350-362 (DGEKGPKGQKGDP) are enriched in basic and acidic residues. The segment covering 411–422 (PGPPGPPGPPGP) has biased composition (pro residues). Composition is skewed to basic and acidic residues over residues 435–444 (DGAKGEKGAS) and 486–503 (RGEK…ERGV).

Homotrimer. Post-translationally, undergoes proteolytic cleavage by furin protease to yield a 60 kDa soluble form that forms a homotrimer and exhibits a low affinity interaction with heparin.

It is found in the cell membrane. In Homo sapiens (Human), this protein is Collagen alpha-1(XXIII) chain (COL23A1).